A 611-amino-acid chain; its full sequence is MTIKLLSESTINRIAAGEVIERPASVVKELVENAVDAGSTKIDIILERAGKNLIIISDDGVGMTDKELEIAVERHTTSKLDETDFLNIHTFGFRGEALPSIAAISKMLITSKKRDNQKAFQIKLIGGDEKQIAPAIHNEGTKIEIRDLFFATPARLKFLRTDKTELAATVDVVKKIALAHPEISFSLTHDGKTLLKLKGQNKDAENNLKQRIIDVIGEDFIKNASYIDFKSPDFSIYGYTSIPTYNRASSEDQFLFINNRPVKDKLLQVALRVAYQDYMLRDRYPLCAIFLQIDPQLVDVNVHPAKAEVRFHDPNYVRNLLIDSIKNALSNKSHIASTTIASSAIELFKNPFVNKEPAISKPLNVNSKPSKYRPATSPTVPKYTPNNSCQKLIDTLPHARIEQEVEQRIQNEPQKSSQYRLGAAKAQLHTTYVISQTEDSIVITDQHAAHERLGYEKIKNYIKNEELIKQRLLIPEIVELPDEKRADILYENKDKLSKLGLSLEKFGEKSIIVTEIPNILGDINVQKLIQDLADHLAECGENIALTELIEHVTETYACHYSIRAGRKLSADEMNALLRQMENTPFSGQCNHGRPTYIELKLKDIERLFGRK.

Positions 364-384 are disordered; it reads NVNSKPSKYRPATSPTVPKYT.

This sequence belongs to the DNA mismatch repair MutL/HexB family.

Functionally, this protein is involved in the repair of mismatches in DNA. It is required for dam-dependent methyl-directed DNA mismatch repair. May act as a 'molecular matchmaker', a protein that promotes the formation of a stable complex between two or more DNA-binding proteins in an ATP-dependent manner without itself being part of a final effector complex. This Rickettsia bellii (strain OSU 85-389) protein is DNA mismatch repair protein MutL.